A 209-amino-acid chain; its full sequence is 3-hexulose-6-phosphate synthase (209 aa).

It belongs to the HPS/KGPDC family. HPS subfamily. In terms of assembly, homodimer.

The enzyme catalyses D-ribulose 5-phosphate + formaldehyde = D-arabino-hex-3-ulose 6-phosphate. Its pathway is one-carbon metabolism; formaldehyde assimilation via RuMP pathway; D-fructose 6-phosphate from D-ribulose 5-phosphate and formaldehyde: step 1/2. Catalyzes the condensation of ribulose 5-phosphate with formaldehyde to form 3-hexulose 6-phosphate. The protein is 3-hexulose-6-phosphate synthase (rmpA) of Methylomonas aminofaciens.